A 344-amino-acid chain; its full sequence is UDP-3-O-acylglucosamine N-acyltransferase (344 aa).

His-248 acts as the Proton acceptor in catalysis.

It belongs to the transferase hexapeptide repeat family. LpxD subfamily. As to quaternary structure, homotrimer.

The enzyme catalyses a UDP-3-O-[(3R)-3-hydroxyacyl]-alpha-D-glucosamine + a (3R)-hydroxyacyl-[ACP] = a UDP-2-N,3-O-bis[(3R)-3-hydroxyacyl]-alpha-D-glucosamine + holo-[ACP] + H(+). The protein operates within bacterial outer membrane biogenesis; LPS lipid A biosynthesis. In terms of biological role, catalyzes the N-acylation of UDP-3-O-acylglucosamine using 3-hydroxyacyl-ACP as the acyl donor. Is involved in the biosynthesis of lipid A, a phosphorylated glycolipid that anchors the lipopolysaccharide to the outer membrane of the cell. The sequence is that of UDP-3-O-acylglucosamine N-acyltransferase from Synechocystis sp. (strain ATCC 27184 / PCC 6803 / Kazusa).